The primary structure comprises 364 residues: Aminomethyltransferase (364 aa).

It belongs to the GcvT family. As to quaternary structure, the glycine cleavage system is composed of four proteins: P, T, L and H.

It catalyses the reaction N(6)-[(R)-S(8)-aminomethyldihydrolipoyl]-L-lysyl-[protein] + (6S)-5,6,7,8-tetrahydrofolate = N(6)-[(R)-dihydrolipoyl]-L-lysyl-[protein] + (6R)-5,10-methylene-5,6,7,8-tetrahydrofolate + NH4(+). Its function is as follows. The glycine cleavage system catalyzes the degradation of glycine. This is Aminomethyltransferase from Shewanella baltica (strain OS195).